A 597-amino-acid polypeptide reads, in one-letter code: Proline--tRNA ligase (597 aa).

The protein belongs to the class-II aminoacyl-tRNA synthetase family. ProS type 1 subfamily. In terms of assembly, homodimer.

It localises to the cytoplasm. It carries out the reaction tRNA(Pro) + L-proline + ATP = L-prolyl-tRNA(Pro) + AMP + diphosphate. Catalyzes the attachment of proline to tRNA(Pro) in a two-step reaction: proline is first activated by ATP to form Pro-AMP and then transferred to the acceptor end of tRNA(Pro). As ProRS can inadvertently accommodate and process non-cognate amino acids such as alanine and cysteine, to avoid such errors it has two additional distinct editing activities against alanine. One activity is designated as 'pretransfer' editing and involves the tRNA(Pro)-independent hydrolysis of activated Ala-AMP. The other activity is designated 'posttransfer' editing and involves deacylation of mischarged Ala-tRNA(Pro). The misacylated Cys-tRNA(Pro) is not edited by ProRS. The protein is Proline--tRNA ligase of Bifidobacterium longum (strain NCC 2705).